The chain runs to 347 residues: N-acetyl-gamma-glutamyl-phosphate reductase (347 aa).

The active site involves Cys151.

This sequence belongs to the NAGSA dehydrogenase family. Type 1 subfamily.

It localises to the cytoplasm. It catalyses the reaction N-acetyl-L-glutamate 5-semialdehyde + phosphate + NADP(+) = N-acetyl-L-glutamyl 5-phosphate + NADPH + H(+). It participates in amino-acid biosynthesis; L-arginine biosynthesis; N(2)-acetyl-L-ornithine from L-glutamate: step 3/4. In terms of biological role, catalyzes the NADPH-dependent reduction of N-acetyl-5-glutamyl phosphate to yield N-acetyl-L-glutamate 5-semialdehyde. The sequence is that of N-acetyl-gamma-glutamyl-phosphate reductase from Corynebacterium diphtheriae (strain ATCC 700971 / NCTC 13129 / Biotype gravis).